Here is a 443-residue protein sequence, read N- to C-terminus: Zinc finger protein ZIC 1 (443 aa).

The C2H2-type 1; atypical zinc-finger motif lies at 221–256 (LICKWIEPEQLANPKKSCNKTFSTMHELVTHVTVEH). The segment at 265-292 (HICVWEECPREGKPFKAKYKLINHIRVH) adopts a C2H2-type 2; atypical zinc-finger fold. C2H2-type zinc fingers lie at residues 298–322 (FPCP…KRTH), 328–352 (FKCE…MHVH), and 358–380 (YLCK…MKVH). The disordered stretch occupies residues 371 to 433 (SSLRKHMKVH…AVHHTSNHST (63 aa)). Over residues 383–396 (SSQGSQPSPAASSG) the composition is skewed to low complexity. Residues 397 to 413 (YESSTPPTIVSPSAENQ) are compositionally biased toward polar residues. Residues 408–443 (PSAENQSTSSLSPSSSAVHHTSNHSTLSSNFNEWYV) form a negatively regulates transcriptional activity region. Residues 414–433 (STSSLSPSSSAVHHTSNHST) are compositionally biased toward low complexity.

It belongs to the GLI C2H2-type zinc-finger protein family. In terms of tissue distribution, during early gastrula stages, widely expressed in the dorsal ectoderm. At mid-gastrula, expressed throughout the presumptive neural plate and at late gastrula, expression gradually diminishes in the dorsal midline and increases in the anterior folds. By early neurula stage, expression becomes restricted to the lateral edges of the neural plate, corresponding to the presumptive dorsal neural plate and neural crest, and in flanking ectoderm. In early tailbud stages (stages 22-23), expressed in the dorsal forebrain, midbrain and hindbrain. Subsequently expressed in the telencephalon and at the diencephalon/mesencephalon boundary. In the spinal cord, expression is restricted to the dorsal most region including the roof plate. Also expressed in the somites but not in eye vesicles. At larval stages, expressed mainly in the dorsal neural tube throughout its anteroposterior axis.

It localises to the nucleus. It is found in the cytoplasm. Functionally, transcriptional activator that induces expression of multiple genes including pax3, en2, snai2/slug, feb and a subset of wnt genes. Has multiple key roles in the regulation of neural induction and neurogenesis: acts as a neural competence factor, sensitizing the presumptive neuroectoderm to respond to subsequent neuralizing signals. Promotes both preplacodal cell fates and neural crest cell fates, two of the cell populations that arise from the neural plate border. Cooperates with pax3 in concert with wnt signaling to determine neural crest fate. Synergizes with the bmp-inhibitor noggin/nog and acts through the wnt pathway to induce expression of en2. May bind to the minimal GLI-consensus sequence 5'-TGGGTGGTC-3'. This is Zinc finger protein ZIC 1 (zic1) from Xenopus laevis (African clawed frog).